The chain runs to 235 residues: 2-C-methyl-D-erythritol 4-phosphate cytidylyltransferase (235 aa).

The protein belongs to the IspD/TarI cytidylyltransferase family. IspD subfamily.

It catalyses the reaction 2-C-methyl-D-erythritol 4-phosphate + CTP + H(+) = 4-CDP-2-C-methyl-D-erythritol + diphosphate. The protein operates within isoprenoid biosynthesis; isopentenyl diphosphate biosynthesis via DXP pathway; isopentenyl diphosphate from 1-deoxy-D-xylulose 5-phosphate: step 2/6. In terms of biological role, catalyzes the formation of 4-diphosphocytidyl-2-C-methyl-D-erythritol from CTP and 2-C-methyl-D-erythritol 4-phosphate (MEP). This is 2-C-methyl-D-erythritol 4-phosphate cytidylyltransferase from Pseudomonas fluorescens (strain ATCC BAA-477 / NRRL B-23932 / Pf-5).